A 755-amino-acid polypeptide reads, in one-letter code: Ribosome biogenesis protein BOP1 (755 aa).

Composition is skewed to polar residues over residues 1–10 and 43–61; these read MSQEPSSSFS and ELSSSSDNGDQGQPLTEPN. A disordered region spans residues 1 to 65; that stretch reads MSQEPSSSFS…PLTEPNNIPI (65 aa). The segment at 309–754 is interaction with EB1; that stretch reads MDSMLPTLPN…SGTDGVLRLF (446 aa). The stretch at 335-374 is one WD 1 repeat; the sequence is TGTRRINGLTFSPKGMFFAVGGRDCILRVFETYSGRQVRA. The segment at 482–505 is disordered; that stretch reads YNEGSEDDDAAESARFNEERHQRG. Positions 496–505 are enriched in basic and acidic residues; it reads RFNEERHQRG. WD repeat units lie at residues 617–655, 659–698, and 725–755; these read PGVKQVTASGMGYGDNFITGSADSQCALFANAAGPEPTA, YHTSTIRNIDVHPCGGLVATCSDDGIVQISRIVDASLVKM, and DGSVGISRVTWHPRQPWLLCSGTDGVLRLFK.

Belongs to the WD repeat BOP1/ERB1 family. As to quaternary structure, interacts (via C-terminal WD repeats) with giardin subunit beta. Interacts (via C-terminal WD repeats) with EB1.

The protein localises to the nucleus. It localises to the nucleolus. Its subcellular location is the nucleus membrane. Functionally, required for maturation of ribosomal RNAs and formation of the large ribosomal subunit. In Giardia intestinalis (Giardia lamblia), this protein is Ribosome biogenesis protein BOP1.